Here is a 502-residue protein sequence, read N- to C-terminus: 2,3-bisphosphoglycerate-independent phosphoglycerate mutase (502 aa).

Asp12 and Ser62 together coordinate Mn(2+). Residue Ser62 is the Phosphoserine intermediate of the active site. Substrate-binding positions include His123, 152-153 (RD), Arg183, Arg189, 255-258 (RPDR), and Lys329. Asp394, His398, Asp435, His436, and His453 together coordinate Mn(2+).

The protein belongs to the BPG-independent phosphoglycerate mutase family. Monomer. It depends on Mn(2+) as a cofactor.

It catalyses the reaction (2R)-2-phosphoglycerate = (2R)-3-phosphoglycerate. It functions in the pathway carbohydrate degradation; glycolysis; pyruvate from D-glyceraldehyde 3-phosphate: step 3/5. Functionally, catalyzes the interconversion of 2-phosphoglycerate and 3-phosphoglycerate. The chain is 2,3-bisphosphoglycerate-independent phosphoglycerate mutase from Malacoplasma penetrans (strain HF-2) (Mycoplasma penetrans).